The primary structure comprises 429 residues: Enolase (429 aa).

Q166 is a binding site for (2R)-2-phosphoglycerate. E208 (proton donor) is an active-site residue. D245, E289, and D316 together coordinate Mg(2+). The (2R)-2-phosphoglycerate site is built by K341, R370, S371, and K392. K341 acts as the Proton acceptor in catalysis.

This sequence belongs to the enolase family. In terms of assembly, component of the RNA degradosome, a multiprotein complex involved in RNA processing and mRNA degradation. Requires Mg(2+) as cofactor.

It is found in the cytoplasm. The protein localises to the secreted. Its subcellular location is the cell surface. It carries out the reaction (2R)-2-phosphoglycerate = phosphoenolpyruvate + H2O. Its pathway is carbohydrate degradation; glycolysis; pyruvate from D-glyceraldehyde 3-phosphate: step 4/5. In terms of biological role, catalyzes the reversible conversion of 2-phosphoglycerate (2-PG) into phosphoenolpyruvate (PEP). It is essential for the degradation of carbohydrates via glycolysis. The protein is Enolase of Acinetobacter baumannii (strain AB307-0294).